Reading from the N-terminus, the 395-residue chain is Succinyl-diaminopimelate desuccinylase (395 aa).

A Zn(2+)-binding site is contributed by histidine 74. Aspartate 76 is a catalytic residue. Aspartate 107 provides a ligand contact to Zn(2+). The active-site Proton acceptor is the glutamate 141. Glutamate 142, glutamate 170, and histidine 368 together coordinate Zn(2+).

The protein belongs to the peptidase M20A family. DapE subfamily. As to quaternary structure, homodimer. The cofactor is Zn(2+). Requires Co(2+) as cofactor.

The catalysed reaction is N-succinyl-(2S,6S)-2,6-diaminopimelate + H2O = (2S,6S)-2,6-diaminopimelate + succinate. The protein operates within amino-acid biosynthesis; L-lysine biosynthesis via DAP pathway; LL-2,6-diaminopimelate from (S)-tetrahydrodipicolinate (succinylase route): step 3/3. Catalyzes the hydrolysis of N-succinyl-L,L-diaminopimelic acid (SDAP), forming succinate and LL-2,6-diaminopimelate (DAP), an intermediate involved in the bacterial biosynthesis of lysine and meso-diaminopimelic acid, an essential component of bacterial cell walls. In Brucella abortus (strain S19), this protein is Succinyl-diaminopimelate desuccinylase.